Here is a 128-residue protein sequence, read N- to C-terminus: Large ribosomal subunit protein bL19 (128 aa).

It belongs to the bacterial ribosomal protein bL19 family.

This protein is located at the 30S-50S ribosomal subunit interface and may play a role in the structure and function of the aminoacyl-tRNA binding site. This Verminephrobacter eiseniae (strain EF01-2) protein is Large ribosomal subunit protein bL19.